The primary structure comprises 228 residues: SPbeta prophage-derived uncharacterized protein YomL (228 aa).

The first 28 residues, 1 to 28, serve as a signal peptide directing secretion; the sequence is MRKKRVITCVMAASLTLGSLLPAGYATA.

The sequence is that of SPbeta prophage-derived uncharacterized protein YomL (yomL) from Bacillus subtilis (strain 168).